The sequence spans 277 residues: Diaminopimelate epimerase (277 aa).

Asn13, Gln46, and Asn65 together coordinate substrate. Cys74 serves as the catalytic Proton donor. Substrate is bound by residues 75–76 (GN), Asn158, Asn191, and 209–210 (ER). Residue Cys218 is the Proton acceptor of the active site. Residue 219-220 (GT) participates in substrate binding.

This sequence belongs to the diaminopimelate epimerase family. Homodimer.

The protein localises to the cytoplasm. The enzyme catalyses (2S,6S)-2,6-diaminopimelate = meso-2,6-diaminopimelate. Its pathway is amino-acid biosynthesis; L-lysine biosynthesis via DAP pathway; DL-2,6-diaminopimelate from LL-2,6-diaminopimelate: step 1/1. In terms of biological role, catalyzes the stereoinversion of LL-2,6-diaminopimelate (L,L-DAP) to meso-diaminopimelate (meso-DAP), a precursor of L-lysine and an essential component of the bacterial peptidoglycan. The chain is Diaminopimelate epimerase from Nitrosospira multiformis (strain ATCC 25196 / NCIMB 11849 / C 71).